The primary structure comprises 248 residues: Exosome complex component Rrp41 (248 aa).

The protein belongs to the RNase PH family. Rrp41 subfamily. Component of the archaeal exosome complex. Forms a hexameric ring-like arrangement composed of 3 Rrp41-Rrp42 heterodimers. The hexameric ring associates with a trimer of Rrp4 and/or Csl4 subunits.

The protein localises to the cytoplasm. Catalytic component of the exosome, which is a complex involved in RNA degradation. Has 3'-&gt;5' exoribonuclease activity. Can also synthesize heteromeric RNA-tails. Binds RNA. The protein is Exosome complex component Rrp41 of Saccharolobus solfataricus (strain ATCC 35092 / DSM 1617 / JCM 11322 / P2) (Sulfolobus solfataricus).